Here is a 546-residue protein sequence, read N- to C-terminus: Chaperonin GroEL (546 aa).

Residues 30 to 33, Lys51, 87 to 91, Gly415, 479 to 481, and Asp495 contribute to the ATP site; these read TLGP, DGTTT, and NAA. A disordered region spans residues 527–546; sequence DESAAPAMPGGMGGMGDMGM. A compositionally biased stretch (gly residues) spans 536–546; that stretch reads GGMGGMGDMGM.

The protein belongs to the chaperonin (HSP60) family. Forms a cylinder of 14 subunits composed of two heptameric rings stacked back-to-back. Interacts with the co-chaperonin GroES.

It localises to the cytoplasm. It carries out the reaction ATP + H2O + a folded polypeptide = ADP + phosphate + an unfolded polypeptide.. Functionally, together with its co-chaperonin GroES, plays an essential role in assisting protein folding. The GroEL-GroES system forms a nano-cage that allows encapsulation of the non-native substrate proteins and provides a physical environment optimized to promote and accelerate protein folding. This chain is Chaperonin GroEL, found in Acidovorax sp. (strain JS42).